A 73-amino-acid polypeptide reads, in one-letter code: Serine rich endogenous peptide 14 (73 aa).

The first 31 residues, 1–31 (MAAKTSNLVALLLSLFLLLLSISSQVGLGEA), serve as a signal peptide directing secretion. Positions 44-73 (VSHPSPPPPHRSMAPPIFVPPSTSHKGQGP) are disordered. Positions 59–73 (PIFVPPSTSHKGQGP) match the SCOOP motif motif. Polar residues predominate over residues 64–73 (PSTSHKGQGP). The SxS motif essential for MIK2 binding signature appears at 65 to 67 (STS).

It belongs to the serine rich endogenous peptide (SCOOP) phytocytokine family. In terms of assembly, interacts with MIK2 (via extracellular leucine-rich repeat domain); this interaction triggers the formation of complex between MIK2 and the BAK1/SERK3 and SERK4 coreceptors, and subsequent BAK1 activation by phosphorylation. In terms of tissue distribution, mostly expressed in seedlings shoots and leaves, and, to a lower extent, in roots, stems, siliques, seeds and flowers.

It localises to the cell membrane. It is found in the secreted. Its subcellular location is the extracellular space. The protein localises to the apoplast. In terms of biological role, brassicaceae-specific phytocytokine (plant endogenous peptide released into the apoplast) perceived by MIK2 in a BAK1/SERK3 and SERK4 coreceptors-dependent manner, that modulates various physiological and antimicrobial processes including growth prevention and reactive oxygen species (ROS) response regulation. Inhibits root growth and regulates root meristems. Prevents general growth and development. Exhibits antibacterial effects against Pseudomonas syringae pv. tomato DC3000, Ralstonia solanacearum, Bacillus subtilis and Agrobacterium tumefaciens, thus being an antimicrobial peptide (AMP). The polypeptide is Serine rich endogenous peptide 14 (Arabidopsis thaliana (Mouse-ear cress)).